Here is a 156-residue protein sequence, read N- to C-terminus: Transcriptional repressor NrdR (156 aa).

The segment at 3–34 is a zinc-finger region; the sequence is CPFCGNVDTQVKDSRPAEDHVAIRRRRFCPAC. In terms of domain architecture, ATP-cone spans 49–139; sequence LVVIKSNGKR…VYKNFQATGD (91 aa).

This sequence belongs to the NrdR family. Requires Zn(2+) as cofactor.

In terms of biological role, negatively regulates transcription of bacterial ribonucleotide reductase nrd genes and operons by binding to NrdR-boxes. This chain is Transcriptional repressor NrdR, found in Jannaschia sp. (strain CCS1).